We begin with the raw amino-acid sequence, 56 residues long: Large ribosomal subunit protein bL33 (56 aa).

This sequence belongs to the bacterial ribosomal protein bL33 family.

The polypeptide is Large ribosomal subunit protein bL33 (Marinomonas sp. (strain MWYL1)).